A 298-amino-acid polypeptide reads, in one-letter code: Sulfofructose kinase (298 aa).

Asp13, Lys27, Gly39, Ser95, and Arg138 together coordinate 6-deoxy-6-sulfo-D-fructose. 4 residues coordinate ATP: Thr212, Gly214, Gly217, and Gly243. Asp244 contributes to the 6-deoxy-6-sulfo-D-fructose binding site.

It belongs to the carbohydrate kinase PfkB family. Homodimer.

It catalyses the reaction 6-deoxy-6-sulfo-D-fructose + ATP = 6-deoxy-6-sulfo-D-fructose 1-phosphate + ADP + H(+). Its activity is regulated as follows. Strongly inhibited by ADP. Activated by sulfoquinovose (SQ), sulfolactaldehyde (SLA) and dihydroxyacetone phosphate (DHAP) (through effects on KM) and by fructose 6-phosphate (F6P), fructose bisphosphate (FBP), phosphoenolpyruvate (PEP) and citrate (through effects on kcat/KM). Phosphorylates 6-deoxy-6-sulfo-D-fructose (SF) to 6-deoxy-6-sulfo-D-fructose 1-phosphate (SFP). Cannot phosphorylate fructose 6-phosphate. This Escherichia coli (strain K12) protein is Sulfofructose kinase (yihV).